Consider the following 639-residue polypeptide: Tubulin--tyrosine ligase-like protein 12 (639 aa).

A TTL domain is found at 295 to 639; sequence PQGHVFRVHC…TDNCHVTRII (345 aa). Residues 445–448, lysine 463, and aspartate 465 contribute to the ATP site; that span reads SKYI.

The protein belongs to the tubulin--tyrosine ligase family. In terms of assembly, interacts with MAVS; the interaction prevents MAVS binding to TBK1 and IKBKE. Interacts (via N-terminus) with TBK1 (via protein kinase domain). Interacts (via TTL domain) with IKBKE (via protein kinase domain). Interacts with tubulin alpha. Interacts with histone H3 and histone H4 (when trimethylated at 'Lys-20' (H4K20me3)). Interacts with CBX3. Widely expressed with highest levels in brain, kidney, liver, lung, muscle and testis.

It localises to the cytoplasm. The protein localises to the midbody. The protein resides in the cytoskeleton. It is found in the microtubule organizing center. Its subcellular location is the centrosome. It localises to the spindle. The protein localises to the nucleus. Functionally, negatively regulates post-translational modifications of tubulin, including detyrosination of the C-terminus and polyglutamylation of glutamate residues. Also, indirectly promotes histone H4 trimethylation at 'Lys-20' (H4K20me3). Probably by controlling tubulin and/or histone H4 post-translational modifications, plays a role in mitosis and in maintaining chromosome number stability. During RNA virus-mediated infection, acts as a negative regulator of the RIG-I pathway by preventing MAVS binding to TBK1 and IKBKE. This Mus musculus (Mouse) protein is Tubulin--tyrosine ligase-like protein 12.